The following is a 912-amino-acid chain: Ubiquitin carboxyl-terminal hydrolase 3 (912 aa).

The segment covering 1-11 has biased composition (basic and acidic residues); the sequence is MNMQDANKEES. Disordered stretches follow at residues 1-30, 68-176, 241-384, and 396-417; these read MNMQ…TNMQ, IYHQ…SYSS, NSSV…TTAG, and GKSS…YVPP. Low complexity-rich tracts occupy residues 82–95, 102–140, and 159–176; these read NNIN…NNNI, SNGI…SNNH, and TNSS…SYSS. Basic residues predominate over residues 249-259; sequence AHHHTKSHSIP. Residues 260–310 show a composition bias toward basic and acidic residues; the sequence is KHNEEVKTETHGEEEDAHDKKPHASKDAHELKKKTEVKKEDAKQDRNEKVI. Low complexity predominate over residues 335 to 355; sequence SKTSSPSPSPPAAKSWSAIAS. 2 stretches are compositionally biased toward polar residues: residues 361-384 and 396-406; these read RQAS…TTAG and GKSSSPLLSKQ. Residues 460–911 form the USP domain; it reads RGIINRANIC…TAYILMYQKR (452 aa). Catalysis depends on Cys469, which acts as the Nucleophile. The Proton acceptor role is filled by His861.

Belongs to the peptidase C19 family. Heterotetramer with BRE5; contains two molecules of BRE5 and two molecules of UBP3. Forms a complex composed of CDC48, DOA1, deubiquitinase UBP3 and probably BRE5. Within the complex interacts directly with DOA1 and CDC48 in a BRE5-independent manner.

It carries out the reaction Thiol-dependent hydrolysis of ester, thioester, amide, peptide and isopeptide bonds formed by the C-terminal Gly of ubiquitin (a 76-residue protein attached to proteins as an intracellular targeting signal).. Has an ATP-independent isopeptidase activity, cleaving at the C-terminus of the ubiquitin moiety in natural or engineered linear fusion proteins, irrespective of their size or the presence of an N-terminal extension to ubiquitin. Plays a role in regulation of silencing by interacting with SIR4. Also, in conjunction with BRE5, cleaves ubiquitin, leading to the subsequent mono-ubiquitination of SEC23. Required for ribophagy, a process which relocalizes ribosomal particles into the vacuole for degradation in response to starvation. In Saccharomyces cerevisiae (strain ATCC 204508 / S288c) (Baker's yeast), this protein is Ubiquitin carboxyl-terminal hydrolase 3 (UBP3).